The following is a 262-amino-acid chain: Pyridoxine 5'-phosphate synthase (262 aa).

Residue Asn6 coordinates 3-amino-2-oxopropyl phosphate. Position 8–9 (8–9 (DH)) interacts with 1-deoxy-D-xylulose 5-phosphate. Arg17 is a 3-amino-2-oxopropyl phosphate binding site. The Proton acceptor role is filled by His43. Residues Arg45 and His50 each coordinate 1-deoxy-D-xylulose 5-phosphate. Catalysis depends on Glu70, which acts as the Proton acceptor. Thr102 lines the 1-deoxy-D-xylulose 5-phosphate pocket. The active-site Proton donor is the His215. 3-amino-2-oxopropyl phosphate contacts are provided by residues Gly216 and 237–238 (GH).

The protein belongs to the PNP synthase family. As to quaternary structure, homooctamer; tetramer of dimers.

It is found in the cytoplasm. The enzyme catalyses 3-amino-2-oxopropyl phosphate + 1-deoxy-D-xylulose 5-phosphate = pyridoxine 5'-phosphate + phosphate + 2 H2O + H(+). It participates in cofactor biosynthesis; pyridoxine 5'-phosphate biosynthesis; pyridoxine 5'-phosphate from D-erythrose 4-phosphate: step 5/5. Catalyzes the complicated ring closure reaction between the two acyclic compounds 1-deoxy-D-xylulose-5-phosphate (DXP) and 3-amino-2-oxopropyl phosphate (1-amino-acetone-3-phosphate or AAP) to form pyridoxine 5'-phosphate (PNP) and inorganic phosphate. The chain is Pyridoxine 5'-phosphate synthase from Helicobacter pylori (strain ATCC 700392 / 26695) (Campylobacter pylori).